Here is a 119-residue protein sequence, read N- to C-terminus: Immunoglobulin lambda variable 2-11 (119 aa).

Residues 1–19 (MAWALLLLSLLTQGTGSWA) form the signal peptide. At Q20 the chain carries Pyrrolidone carboxylic acid. The framework-1 stretch occupies residues 20-44 (QSALTQPRSVSGSPGQSVTISCTGT). In terms of domain architecture, Ig-like spans 20 to 119 (QSALTQPRSV…CSYAGSYTFH (100 aa)). C41 and C109 are disulfide-bonded. Residues 45 to 53 (SSDVGGYNY) are complementarity-determining-1. A framework-2 region spans residues 54–70 (VSWYQQHPGKAPKLMIY). Positions 71-73 (DVS) are complementarity-determining-2. The tract at residues 74 to 109 (KRPSGVPDRFSGSKSGNTASLTISGLQAEDEADYYC) is framework-3. Positions 110 to 119 (CSYAGSYTFH) are complementarity-determining-3.

Immunoglobulins are composed of two identical heavy chains and two identical light chains; disulfide-linked.

It is found in the secreted. The protein localises to the cell membrane. Functionally, v region of the variable domain of immunoglobulin light chains that participates in the antigen recognition. Immunoglobulins, also known as antibodies, are membrane-bound or secreted glycoproteins produced by B lymphocytes. In the recognition phase of humoral immunity, the membrane-bound immunoglobulins serve as receptors which, upon binding of a specific antigen, trigger the clonal expansion and differentiation of B lymphocytes into immunoglobulins-secreting plasma cells. Secreted immunoglobulins mediate the effector phase of humoral immunity, which results in the elimination of bound antigens. The antigen binding site is formed by the variable domain of one heavy chain, together with that of its associated light chain. Thus, each immunoglobulin has two antigen binding sites with remarkable affinity for a particular antigen. The variable domains are assembled by a process called V-(D)-J rearrangement and can then be subjected to somatic hypermutations which, after exposure to antigen and selection, allow affinity maturation for a particular antigen. This is Immunoglobulin lambda variable 2-11 from Homo sapiens (Human).